A 440-amino-acid polypeptide reads, in one-letter code: MLLPGHPRPPPAPQSAQNQGLRRQVEPPGQLLRLFYCTVLVCSKETSALTDFSGYLTKLLQNHTAYACDGDYLNLQCPRHSTISVQSAFYGQDYQMCSSQEPISQREDNLTCVASTTLQKVLDECQNQRACHLLVNSRVFGPDLCPGSSKYLLVSFKCQPNELKNKTVCENQELKLHCHESKFLNIYSAAYGRRTQQRDICSSGAELLPPFDCLSYTALQVLSRRCYGKQRCKVLVDNYHFGSPCLPGVKKYLTVAYACVPKNILTAVDPAVANLNPSLKKDDEHGITFNPSGSRVVRKDGVIVSNSLAAFAYIRAHPERAALLFMSSVCIGLLLTLCALVIRVSCTKDFRELRQGREHLVLGSDKAEEDSEEDLEEEDSSDSQFPEELSRFCRTSYPAYSSIEAAELAERIERREQVIQEIWMNSGLDSSLPRNVGHFY.

The segment covering M1 to P13 has biased composition (pro residues). The interval M1–R23 is disordered. The signal sequence occupies residues M1–A48. Residues L49–A321 lie on the Extracellular side of the membrane. N62, N109, and N165 each carry an N-linked (GlcNAc...) asparagine glycan. Positions A67–Q159 constitute an SUEL-type lectin 1 domain. An SUEL-type lectin 2 domain is found at V168 to V260. Residues A322–I342 traverse the membrane as a helical segment. The Cytoplasmic segment spans residues R343–Y440. The interval S364–Q384 is disordered. Positions A367–S381 are enriched in acidic residues.

This sequence belongs to the EVA1 family. As to expression, ubiquitous.

Its subcellular location is the cell membrane. Binds heparin. The chain is Protein eva-1 homolog C (Eva1c) from Mus musculus (Mouse).